Reading from the N-terminus, the 147-residue chain is D-aminoacyl-tRNA deacylase (147 aa).

Residues 136–137 carry the Gly-cisPro motif, important for rejection of L-amino acids motif; that stretch reads GP.

It belongs to the DTD family. Homodimer.

Its subcellular location is the cytoplasm. It catalyses the reaction glycyl-tRNA(Ala) + H2O = tRNA(Ala) + glycine + H(+). The enzyme catalyses a D-aminoacyl-tRNA + H2O = a tRNA + a D-alpha-amino acid + H(+). Functionally, an aminoacyl-tRNA editing enzyme that deacylates mischarged D-aminoacyl-tRNAs. Also deacylates mischarged glycyl-tRNA(Ala), protecting cells against glycine mischarging by AlaRS. Acts via tRNA-based rather than protein-based catalysis; rejects L-amino acids rather than detecting D-amino acids in the active site. By recycling D-aminoacyl-tRNA to D-amino acids and free tRNA molecules, this enzyme counteracts the toxicity associated with the formation of D-aminoacyl-tRNA entities in vivo and helps enforce protein L-homochirality. In Streptococcus suis (strain 98HAH33), this protein is D-aminoacyl-tRNA deacylase.